The chain runs to 447 residues: Na(+)-translocating NADH-quinone reductase subunit A (447 aa).

Belongs to the NqrA family. As to quaternary structure, composed of six subunits; NqrA, NqrB, NqrC, NqrD, NqrE and NqrF.

The enzyme catalyses a ubiquinone + n Na(+)(in) + NADH + H(+) = a ubiquinol + n Na(+)(out) + NAD(+). Functionally, NQR complex catalyzes the reduction of ubiquinone-1 to ubiquinol by two successive reactions, coupled with the transport of Na(+) ions from the cytoplasm to the periplasm. NqrA to NqrE are probably involved in the second step, the conversion of ubisemiquinone to ubiquinol. The protein is Na(+)-translocating NADH-quinone reductase subunit A of Haemophilus influenzae (strain ATCC 51907 / DSM 11121 / KW20 / Rd).